We begin with the raw amino-acid sequence, 410 residues long: Secreted protein PRY1 (410 aa).

A signal peptide spans 1 to 20 (MKQNYILSIILCYLLANVHS). 3 disordered regions span residues 64 to 86 (PAPVASPAAPAPASSAPQSSTPS), 102 to 132 (SDSDSSSGSDTASAAPASTSPQSSSSSSSSS), and 148 to 260 (SSSS…SSSS). Over residues 148–179 (SSSSTPSSISQQQQQQQGSPASGSNSPNSAQP) the composition is skewed to low complexity. Positions 197–211 (SGLGSGFGSGFGSGS) are enriched in gly residues. The span at 212-260 (GSDSDSGSGLPSASSSTIIQQQPSSSNIGSSSTSSSSSSSSSSSSSSSS) shows a compositional bias: low complexity. The SCP domain maps to 283-394 (LDAHNKYRAQ…NWGLYVVCEY (112 aa)).

Belongs to the CRISP family.

The protein resides in the secreted. Its function is as follows. Secreted protein that acts as a virulence factor during infections. The protein is Secreted protein PRY1 (PRY1) of Candida albicans (strain SC5314 / ATCC MYA-2876) (Yeast).